Reading from the N-terminus, the 582-residue chain is Formate--tetrahydrofolate ligase (582 aa).

Position 65-72 (65-72 (TPLGEGKT)) interacts with ATP.

It belongs to the formate--tetrahydrofolate ligase family.

It catalyses the reaction (6S)-5,6,7,8-tetrahydrofolate + formate + ATP = (6R)-10-formyltetrahydrofolate + ADP + phosphate. The protein operates within one-carbon metabolism; tetrahydrofolate interconversion. This Vibrio vulnificus (strain CMCP6) protein is Formate--tetrahydrofolate ligase.